A 255-amino-acid polypeptide reads, in one-letter code: BTB/POZ domain-containing protein KCTD14 (255 aa).

The interval 1-29 (MWQGCAVERPVGRMTSQTPLPQSPRPRRP) is disordered. One can recognise a BTB domain in the interval 33 to 130 (TVVELNVGGE…LLEDMPQIFG (98 aa)).

The chain is BTB/POZ domain-containing protein KCTD14 (KCTD14) from Homo sapiens (Human).